An 857-amino-acid polypeptide reads, in one-letter code: MSNSSARPESLGEYLAHLPLSDEQRAELASCTSFSELHQRLAANPAASSAEAVQASVGPRLTVGSAAELEDAEMLGVDGSGRLCLKIAPPIKRTKVVPEPWRTNVLIRMWRRMTGRPNAPQPPKRELPPARWRTVGSIRRYILLALMIGQTIVAGWYMKGILPYQGWSFVDFDEIVNQPLWDTVVQVWPYALQTSILILFGILFCWVSAGFWTALMGFLELLTGRDKYKISGSSAGNEPIAPEARTALVMPICNEDVPRVFAGLRATFESVAASGNLDRFDFFVLSDTNDTDIAVAEQQAWLDVCRETKGFGRIFYRRRRRRVKRKSGNLDDFCRRWGGEYKYMVVLDADSVMSGECLSSLVRLMEANPDAGIIQTGPKASGMDTLYARMQQFATRVYGPLFTAGLHFWQLGESHYWGHNAIIRMKPFIEHCALAPLPGKGAFAGAILSHDFVEAALMRRAGWGVWIAYDLPGSYEELPPNLLDELKRDRRWCHGNLMNFRLFLVKGMHPVHRAVFLTGVMSYLSAPLWFLFLVLSTALLATNTLMEPQYFIEPYQLYPLWPQWHPEKAVALFSTTIVLLFLPKLLSVILIWAKGAVEYGGRVKVTLSMLMEMLFSMLLAPVRMIFHTRFVLAAFLGWAATWNSPQRDDDSTPWGEAVRRHGPQTLLGVAWAALVAWLNPSFLWWLAPIVGSLVLSIPVSVISSRTRLGLAAKDEKLFLIPEEYATPQELLATDQYTHENRWHALHDGFVRAVVDPRQNALACAMATARHGQAAPIEALRAERVAKAIEVGPKGLDLNTRLALLSDPVALSRLHEQVWAEHNAAWIDVWRASINNDPHSPLLPLHPENAGQPALVGA.

6 helical membrane-spanning segments follow: residues 142 to 162 (ILLALMIGQTIVAGWYMKGIL), 196 to 216 (ILILFGILFCWVSAGFWTALM), 515 to 535 (VFLTGVMSYLSAPLWFLFLVL), 572 to 592 (LFSTTIVLLFLPKLLSVILIW), 606 to 626 (TLSMLMEMLFSMLLAPVRMIF), and 682 to 702 (FLWWLAPIVGSLVLSIPVSVI).

Belongs to the glycosyltransferase 2 family. OpgH subfamily.

It is found in the cell inner membrane. Its pathway is glycan metabolism; osmoregulated periplasmic glucan (OPG) biosynthesis. In terms of biological role, involved in the biosynthesis of osmoregulated periplasmic glucans (OPGs). The chain is Glucans biosynthesis glucosyltransferase H from Pseudomonas putida (strain ATCC 700007 / DSM 6899 / JCM 31910 / BCRC 17059 / LMG 24140 / F1).